Here is a 139-residue protein sequence, read N- to C-terminus: uncharacterized protein (139 aa).

To S.typhimurium FliF.

Functionally, may be involved in the assembly, structure, or function of the flagellum. May polymerize to form a filamentous structure that is part of the flagellum. This is an uncharacterized protein from Bacillus subtilis (strain 168).